The chain runs to 55 residues: ATP synthase F(0) complex subunit 8 (55 aa).

Residues 4–24 (LNPAPWFMIFMFTWAIFLTIL) form a helical membrane-spanning segment. The tract at residues 34–55 (PNEPSPQGMTTPKTAPWNWPWH) is disordered.

The protein belongs to the ATPase protein 8 family. In terms of assembly, component of the ATP synthase complex composed at least of ATP5F1A/subunit alpha, ATP5F1B/subunit beta, ATP5MC1/subunit c (homooctomer), MT-ATP6/subunit a, MT-ATP8/subunit 8, ATP5ME/subunit e, ATP5MF/subunit f, ATP5MG/subunit g, ATP5MK/subunit k, ATP5MJ/subunit j, ATP5F1C/subunit gamma, ATP5F1D/subunit delta, ATP5F1E/subunit epsilon, ATP5PF/subunit F6, ATP5PB/subunit b, ATP5PD/subunit d, ATP5PO/subunit OSCP. ATP synthase complex consists of a soluble F(1) head domain (subunits alpha(3) and beta(3)) - the catalytic core - and a membrane F(0) domain - the membrane proton channel (subunits c, a, 8, e, f, g, k and j). These two domains are linked by a central stalk (subunits gamma, delta, and epsilon) rotating inside the F1 region and a stationary peripheral stalk (subunits F6, b, d, and OSCP).

The protein localises to the mitochondrion membrane. In terms of biological role, subunit 8, of the mitochondrial membrane ATP synthase complex (F(1)F(0) ATP synthase or Complex V) that produces ATP from ADP in the presence of a proton gradient across the membrane which is generated by electron transport complexes of the respiratory chain. ATP synthase complex consist of a soluble F(1) head domain - the catalytic core - and a membrane F(1) domain - the membrane proton channel. These two domains are linked by a central stalk rotating inside the F(1) region and a stationary peripheral stalk. During catalysis, ATP synthesis in the catalytic domain of F(1) is coupled via a rotary mechanism of the central stalk subunits to proton translocation. In vivo, can only synthesize ATP although its ATP hydrolase activity can be activated artificially in vitro. Part of the complex F(0) domain. The polypeptide is ATP synthase F(0) complex subunit 8 (Gadus morhua (Atlantic cod)).